Reading from the N-terminus, the 803-residue chain is DNA polymerase 2 (803 aa).

This sequence belongs to the DNA polymerase type-B family.

It catalyses the reaction DNA(n) + a 2'-deoxyribonucleoside 5'-triphosphate = DNA(n+1) + diphosphate. This chain is DNA polymerase 2 (polB), found in Aeropyrum pernix (strain ATCC 700893 / DSM 11879 / JCM 9820 / NBRC 100138 / K1).